The sequence spans 81 residues: U10-myrmicitoxin-Mri1b (81 aa).

The N-terminal stretch at 1–26 (MRLSYISLTLAIIFVMAIVHAPETEA) is a signal peptide. A propeptide spanning residues 27 to 52 (KAYPEADAVAEAIAVGEADAVGVADP) is cleaved from the precursor. Val-80 is subject to Valine amide.

This sequence belongs to the formicidae venom precursor-01 superfamily. As to expression, expressed by the venom gland.

The protein localises to the secreted. Its function is as follows. Induces paralysis after injection into blowflies (L.caesar), and then death within 24 hours. May have antimicrobial properties, like most ant linear peptides. This chain is U10-myrmicitoxin-Mri1b, found in Manica rubida (European giant red ant).